The primary structure comprises 726 residues: Methionine--tRNA ligase (726 aa).

The 'HIGH' region signature appears at 12–22 (PYVNNIPHLGN). The Zn(2+) site is built by cysteine 143, cysteine 146, cysteine 155, and cysteine 158. A 'KMSKS' region motif is present at residues 330 to 334 (KFSKS). Position 333 (lysine 333) interacts with ATP. The 106-residue stretch at 562-667 (FSEKVCLKVV…DNPIPGERII (106 aa)) folds into the tRNA-binding domain.

Belongs to the class-I aminoacyl-tRNA synthetase family. MetG type 1 subfamily. Homodimer. Requires Zn(2+) as cofactor.

Its subcellular location is the cytoplasm. It catalyses the reaction tRNA(Met) + L-methionine + ATP = L-methionyl-tRNA(Met) + AMP + diphosphate. Functionally, is required not only for elongation of protein synthesis but also for the initiation of all mRNA translation through initiator tRNA(fMet) aminoacylation. The polypeptide is Methionine--tRNA ligase (Borrelia turicatae (strain 91E135)).